We begin with the raw amino-acid sequence, 519 residues long: Cytochrome P450 4A11 (519 aa).

A propeptide spanning residues methionine 1 to serine 4 is cleaved from the precursor. Position 321 (glutamate 321) interacts with heme. Phosphoserine is present on serine 440. Cysteine 457 lines the heme pocket.

The protein belongs to the cytochrome P450 family. Requires heme as cofactor. Expressed in liver. Expressed in S2 and S3 segments of proximal tubules in cortex and outer medulla of kidney.

It is found in the endoplasmic reticulum membrane. Its subcellular location is the microsome membrane. The enzyme catalyses an organic molecule + reduced [NADPH--hemoprotein reductase] + O2 = an alcohol + oxidized [NADPH--hemoprotein reductase] + H2O + H(+). It catalyses the reaction an omega-methyl-long-chain fatty acid + reduced [NADPH--hemoprotein reductase] + O2 = an omega-hydroxy-long-chain fatty acid + oxidized [NADPH--hemoprotein reductase] + H2O + H(+). It carries out the reaction dodecanoate + reduced [NADPH--hemoprotein reductase] + O2 = 12-hydroxydodecanoate + oxidized [NADPH--hemoprotein reductase] + H2O + H(+). The catalysed reaction is tetradecanoate + reduced [NADPH--hemoprotein reductase] + O2 = 14-hydroxytetradecanoate + oxidized [NADPH--hemoprotein reductase] + H2O + H(+). The enzyme catalyses hexadecanoate + reduced [NADPH--hemoprotein reductase] + O2 = 16-hydroxyhexadecanoate + oxidized [NADPH--hemoprotein reductase] + H2O + H(+). It catalyses the reaction (9Z)-octadecenoate + reduced [NADPH--hemoprotein reductase] + O2 = 18-hydroxy-(9Z)-octadecenoate + oxidized [NADPH--hemoprotein reductase] + H2O + H(+). It carries out the reaction (5Z,8Z,11Z,14Z)-eicosatetraenoate + reduced [NADPH--hemoprotein reductase] + O2 = 20-hydroxy-(5Z,8Z,11Z,14Z)-eicosatetraenoate + oxidized [NADPH--hemoprotein reductase] + H2O + H(+). The catalysed reaction is 22-hydroxydocosanoate + reduced [NADPH--hemoprotein reductase] + O2 = 22-oxodocosanoate + oxidized [NADPH--hemoprotein reductase] + 2 H2O + H(+). The enzyme catalyses 22-oxodocosanoate + reduced [NADPH--hemoprotein reductase] + O2 = docosanedioate + oxidized [NADPH--hemoprotein reductase] + H2O + 2 H(+). It catalyses the reaction (9R,10S)-epoxy-octadecanoate + reduced [NADPH--hemoprotein reductase] + O2 = 18-hydroxy-(9R,10S)-epoxy-octadecanoate + oxidized [NADPH--hemoprotein reductase] + H2O + H(+). It carries out the reaction 3-hydroxyhexadecanoate + reduced [NADPH--hemoprotein reductase] + O2 = 3,16-dihydroxyhexadecanoate + oxidized [NADPH--hemoprotein reductase] + H2O + H(+). It functions in the pathway lipid metabolism; arachidonate metabolism. The protein operates within lipid metabolism; oxylipin biosynthesis. With respect to regulation, activated by cytochrome b5. A cytochrome P450 monooxygenase involved in the metabolism of fatty acids and their oxygenated derivatives (oxylipins). Mechanistically, uses molecular oxygen inserting one oxygen atom into a substrate, and reducing the second into a water molecule, with two electrons provided by NADPH via cytochrome P450 reductase (CPR; NADPH-ferrihemoprotein reductase). Catalyzes predominantly the oxidation of the terminal carbon (omega-oxidation) of saturated and unsaturated fatty acids, the catalytic efficiency decreasing in the following order: dodecanoic &gt; tetradecanoic &gt; (9Z)-octadecenoic &gt; (9Z,12Z)-octadecadienoic &gt; hexadecanoic acid. Acts as a major omega-hydroxylase for dodecanoic (lauric) acid in liver. Participates in omega-hydroxylation of (5Z,8Z,11Z,14Z)-eicosatetraenoic acid (arachidonate) to 20-hydroxyeicosatetraenoic acid (20-HETE), a signaling molecule acting both as vasoconstrictive and natriuretic with overall effect on arterial blood pressure. Can also catalyze the oxidation of the penultimate carbon (omega-1 oxidation) of fatty acids with lower efficiency. May contribute to the degradation of saturated very long-chain fatty acids (VLCFAs) such as docosanoic acid, by catalyzing successive omega-oxidations to the corresponding dicarboxylic acid, thereby initiating chain shortening. Omega-hydroxylates (9R,10S)-epoxy-octadecanoate stereoisomer. Plays a minor role in omega-oxidation of long-chain 3-hydroxy fatty acids. Has little activity toward prostaglandins A1 and E1. This is Cytochrome P450 4A11 from Homo sapiens (Human).